We begin with the raw amino-acid sequence, 282 residues long: Serine/arginine-rich splicing factor 8 (282 aa).

An N-acetylserine modification is found at serine 2. Phosphoserine is present on residues serine 2 and serine 26. The RRM domain occupies 14 to 92 (ITLKVDNLTY…RELRVQVARY (79 aa)). Residues 91-282 (RYGRRDLPRS…SPEEEGQMSS (192 aa)) form a disordered region. The span at 93-107 (GRRDLPRSRQGEPRG) shows a compositional bias: basic and acidic residues. Composition is skewed to basic residues over residues 116–136 (RRSRSYGRRSRSPRRRHRSRS) and 144–154 (SRSRSRYRGSR). 2 stretches are compositionally biased toward low complexity: residues 155–177 (YSRSPYSRSPYSRSRYSRSPYSR) and 185–200 (YGGSHYSSSGYSNSRY). Phosphoserine occurs at positions 156, 158, 171, 173, and 196. A compositionally biased stretch (basic residues) spans 201–210 (SRYHSSRSHS). Composition is skewed to low complexity over residues 211 to 227 (KSGSSTSSRSASTSKSS) and 234 to 255 (SSSVSRSRSRSRSSSMTRSPPR). Basic residues predominate over residues 256–271 (VSKRKSKSRSRSKRPP). Residue serine 273 is modified to Phosphoserine.

The protein belongs to the splicing factor SR family. Strongly expressed in pancreas, spleen and prostate. Weakly expressed in lung, liver and thymus.

It is found in the nucleus. Involved in pre-mRNA alternative splicing. This is Serine/arginine-rich splicing factor 8 (SRSF8) from Homo sapiens (Human).